Here is a 244-residue protein sequence, read N- to C-terminus: Cell adhesion molecule CEACAM4 (244 aa).

The N-terminal stretch at M1–Q35 is a signal peptide. An Ig-like V-type domain is found at F36–H139. At F36 to G155 the chain is on the extracellular side. N-linked (GlcNAc...) asparagine glycans are attached at residues N57, N104, N111, and N126. The helical transmembrane segment at I156–L176 threads the bilayer. At S177 to S244 the chain is on the cytoplasmic side. A disordered region spans residues R186–P215. The ITAM signature appears at Y222–I236.

This sequence belongs to the immunoglobulin superfamily. CEA family. Interacts through its phosphorylated ITAM domain with the SH2 domain-containing cytoplasmic proteins involved in signaling processes during phagocytosis. Post-translationally, N-glycosylated. In terms of processing, the cytoplasmic ITAM-like sequence becomes tyrosine phosphorylated by SRC family PTKs upon ligand-mediated receptor clustering and allows to initiate phagocytosis of bound ligand. Granulocytes.

It is found in the membrane. In terms of biological role, granulocyte orphan receptor that acts as an trigger efficient phagocytosis of attached particles. This Homo sapiens (Human) protein is Cell adhesion molecule CEACAM4.